A 170-amino-acid polypeptide reads, in one-letter code: Crossover junction endodeoxyribonuclease RuvC (170 aa).

Catalysis depends on residues aspartate 11, glutamate 71, and aspartate 143. Aspartate 11, glutamate 71, and aspartate 143 together coordinate Mg(2+).

This sequence belongs to the RuvC family. In terms of assembly, homodimer which binds Holliday junction (HJ) DNA. The HJ becomes 2-fold symmetrical on binding to RuvC with unstacked arms; it has a different conformation from HJ DNA in complex with RuvA. In the full resolvosome a probable DNA-RuvA(4)-RuvB(12)-RuvC(2) complex forms which resolves the HJ. It depends on Mg(2+) as a cofactor.

It is found in the cytoplasm. The catalysed reaction is Endonucleolytic cleavage at a junction such as a reciprocal single-stranded crossover between two homologous DNA duplexes (Holliday junction).. Functionally, the RuvA-RuvB-RuvC complex processes Holliday junction (HJ) DNA during genetic recombination and DNA repair. Endonuclease that resolves HJ intermediates. Cleaves cruciform DNA by making single-stranded nicks across the HJ at symmetrical positions within the homologous arms, yielding a 5'-phosphate and a 3'-hydroxyl group; requires a central core of homology in the junction. The consensus cleavage sequence is 5'-(A/T)TT(C/G)-3'. Cleavage occurs on the 3'-side of the TT dinucleotide at the point of strand exchange. HJ branch migration catalyzed by RuvA-RuvB allows RuvC to scan DNA until it finds its consensus sequence, where it cleaves and resolves the cruciform DNA. This chain is Crossover junction endodeoxyribonuclease RuvC, found in Sinorhizobium fredii (strain NBRC 101917 / NGR234).